A 288-amino-acid polypeptide reads, in one-letter code: MKGIYSALLVSFDKDGNINEKGLREIIRHNIDVCKIDGLYVGGSTGENFMLSTDEKKRIFEIAMDEAKGQVKLIAQVGSVNLKEAVELAKFTTDLGYDAISAVTPFYYKFDFNEIKHYYETIINSVDNKLIIYSIPFLTGVNMSIEQFAELFENDKIIGVKFTAADFYLLERMRKAFPDKLIFAGFDEMMLPATVLGVDGAIGSTFNVNGIRARQIFEAAQKGDIETALEVQHVTNDLITDILNNGLYQTIKLILQEQGVDAGYCRQPMKEATEEMIEKAKEINKKYF.

2 residues coordinate aceneuramate: S44 and T45. Y133 functions as the Proton donor in the catalytic mechanism. K161 (schiff-base intermediate with substrate) is an active-site residue. Residues T163, G185, D187, E188, and S204 each contribute to the aceneuramate site.

It belongs to the DapA family. NanA subfamily. In terms of assembly, homotetramer.

Its subcellular location is the cytoplasm. It catalyses the reaction aceneuramate = aldehydo-N-acetyl-D-mannosamine + pyruvate. It participates in amino-sugar metabolism; N-acetylneuraminate degradation; D-fructose 6-phosphate from N-acetylneuraminate: step 1/5. Functionally, catalyzes the reversible aldol cleavage of N-acetylneuraminic acid (sialic acid; Neu5Ac) to form pyruvate and N-acetylmannosamine (ManNAc) via a Schiff base intermediate. This Clostridium perfringens (strain SM101 / Type A) protein is N-acetylneuraminate lyase.